We begin with the raw amino-acid sequence, 263 residues long: 4-hydroxy-tetrahydrodipicolinate reductase (263 aa).

NAD(+) is bound at residue 10–15 (GASGKM). Arg-38 provides a ligand contact to NADP(+). NAD(+) contacts are provided by residues 97-99 (GTT) and 123-126 (APNF). His-153 functions as the Proton donor/acceptor in the catalytic mechanism. Residue His-154 coordinates (S)-2,3,4,5-tetrahydrodipicolinate. Lys-157 acts as the Proton donor in catalysis. Position 163-164 (163-164 (GT)) interacts with (S)-2,3,4,5-tetrahydrodipicolinate.

This sequence belongs to the DapB family.

Its subcellular location is the cytoplasm. It catalyses the reaction (S)-2,3,4,5-tetrahydrodipicolinate + NAD(+) + H2O = (2S,4S)-4-hydroxy-2,3,4,5-tetrahydrodipicolinate + NADH + H(+). The enzyme catalyses (S)-2,3,4,5-tetrahydrodipicolinate + NADP(+) + H2O = (2S,4S)-4-hydroxy-2,3,4,5-tetrahydrodipicolinate + NADPH + H(+). The protein operates within amino-acid biosynthesis; L-lysine biosynthesis via DAP pathway; (S)-tetrahydrodipicolinate from L-aspartate: step 4/4. Functionally, catalyzes the conversion of 4-hydroxy-tetrahydrodipicolinate (HTPA) to tetrahydrodipicolinate. The protein is 4-hydroxy-tetrahydrodipicolinate reductase of Dehalococcoides mccartyi (strain ATCC BAA-2266 / KCTC 15142 / 195) (Dehalococcoides ethenogenes (strain 195)).